Reading from the N-terminus, the 1036-residue chain is Serine/threonine-protein kinase ULK2 (1036 aa).

A Protein kinase domain is found at 9 to 271 (YSKRDLVGHG…FEAFFSHPFL (263 aa)). Residues 15–23 (VGHGAFAVV) and lysine 39 each bind ATP. Catalysis depends on aspartate 131, which acts as the Proton acceptor. 5 disordered regions span residues 319–348 (ENLS…NSSC), 418–460 (TSTA…ADTA), 491–522 (CCCG…SLLS), 540–588 (QKLR…SSDW), and 656–695 (AEQQ…LNTE). Residues 335-348 (SKDSASTSSKNSSC) show a composition bias toward low complexity. Residues 418 to 428 (TSTASSGTNVH) show a composition bias toward polar residues. At serine 430 the chain carries Phosphoserine. Polar residues predominate over residues 504 to 521 (RNSSGSPVPQAQSPQSLL). Over residues 659 to 679 (QSKAVFGRSVSTGKLSDQQGK) the composition is skewed to polar residues. Residues serine 771 and serine 780 each carry the phosphoserine modification. Residues 812-1036 (ELPEETLMER…SALCHSTATV (225 aa)) form a CTD-like region region.

This sequence belongs to the protein kinase superfamily. Ser/Thr protein kinase family. APG1/unc-51/ULK1 subfamily. Interacts with SYNGAP1. Component of a complex consisting of ATG13/KIAA0652, ULK1 and RB1CC1/FIP200. Interacts (via C-terminus) with ATG13/KIAA0652. Associates with the mammalian target of rapamycin complex 1 (mTORC1) through an interaction with RPTOR. In terms of processing, autophosphorylated. In response to nutrient limitation, probably phosphorylated and activated by AMPK, leading to activate autophagy.

Its subcellular location is the cytoplasmic vesicle membrane. It carries out the reaction L-seryl-[protein] + ATP = O-phospho-L-seryl-[protein] + ADP + H(+). The catalysed reaction is L-threonyl-[protein] + ATP = O-phospho-L-threonyl-[protein] + ADP + H(+). Functionally, serine/threonine-protein kinase involved in autophagy in response to starvation. Acts upstream of phosphatidylinositol 3-kinase PIK3C3 to regulate the formation of autophagophores, the precursors of autophagosomes. Part of regulatory feedback loops in autophagy: acts both as a downstream effector and a negative regulator of mammalian target of rapamycin complex 1 (mTORC1) via interaction with RPTOR. Activated via phosphorylation by AMPK, also acts as a negative regulator of AMPK through phosphorylation of the AMPK subunits PRKAA1, PRKAB2 and PRKAG1. May phosphorylate ATG13/KIAA0652, FRS2, FRS3 and RPTOR; however such data need additional evidences. Not involved in ammonia-induced autophagy or in autophagic response of cerebellar granule neurons (CGN) to low potassium concentration. Plays a role early in neuronal differentiation and is required for granule cell axon formation: may govern axon formation via Ras-like GTPase signaling and through regulation of the Rab5-mediated endocytic pathways within developing axons. The polypeptide is Serine/threonine-protein kinase ULK2 (ULK2) (Homo sapiens (Human)).